A 147-amino-acid polypeptide reads, in one-letter code: Acidic phospholipase A2 S9-53F (147 aa).

Residues 1-19 form the signal peptide; the sequence is MYPAHLLVLLAVCVSLLGA. Positions 20–27 are excised as a propeptide; it reads SDIPPQPL. Intrachain disulfides connect Cys38–Cys99, Cys54–Cys146, Cys56–Cys72, Cys71–Cys127, Cys78–Cys120, Cys88–Cys113, and Cys106–Cys118. Residues Tyr55, Gly57, and Gly59 each coordinate Ca(2+). His75 is a catalytic residue. Position 76 (Asp76) interacts with Ca(2+). Asp121 is an active-site residue.

It belongs to the phospholipase A2 family. Group I subfamily. D49 sub-subfamily. The cofactor is Ca(2+). Expressed by the venom gland.

It localises to the secreted. The enzyme catalyses a 1,2-diacyl-sn-glycero-3-phosphocholine + H2O = a 1-acyl-sn-glycero-3-phosphocholine + a fatty acid + H(+). Functionally, snake venom phospholipase A2 (PLA2) that inhibits collagen-induced platelet aggregation. PLA2 catalyzes the calcium-dependent hydrolysis of the 2-acyl groups in 3-sn-phosphoglycerides. In Austrelaps superbus (Lowland copperhead snake), this protein is Acidic phospholipase A2 S9-53F.